A 962-amino-acid polypeptide reads, in one-letter code: Glycine dehydrogenase (decarboxylating) (962 aa).

The residue at position 709 (Lys709) is an N6-(pyridoxal phosphate)lysine.

It belongs to the GcvP family. The glycine cleavage system is composed of four proteins: P, T, L and H. It depends on pyridoxal 5'-phosphate as a cofactor.

It carries out the reaction N(6)-[(R)-lipoyl]-L-lysyl-[glycine-cleavage complex H protein] + glycine + H(+) = N(6)-[(R)-S(8)-aminomethyldihydrolipoyl]-L-lysyl-[glycine-cleavage complex H protein] + CO2. Its function is as follows. The glycine cleavage system catalyzes the degradation of glycine. The P protein binds the alpha-amino group of glycine through its pyridoxal phosphate cofactor; CO(2) is released and the remaining methylamine moiety is then transferred to the lipoamide cofactor of the H protein. The chain is Glycine dehydrogenase (decarboxylating) from Shewanella sediminis (strain HAW-EB3).